A 389-amino-acid polypeptide reads, in one-letter code: Large envelope protein (389 aa).

At M1 the chain carries N-acetylmethionine. A lipid anchor (N-myristoyl glycine; by host) is attached at G2. Positions 2–108 are pre-S1; that stretch reads GQNLSTSNPL…PPLRDTHPQA (107 aa). The interval 2 to 163 is pre-S; sequence GQNLSTSNPL…FSTTGDPAPN (162 aa). The Virion surface; in external conformation segment spans residues 2-170; it reads GQNLSTSNPL…APNMENITSG (169 aa). The Intravirion; in internal conformation portion of the chain corresponds to 2–242; the sequence is GQNLSTSNPL…PGYRWMCLRR (241 aa). A disordered region spans residues 75 to 107; it reads TTLPANPPPASTNRQSGRQPTPLSPPLRDTHPQ. Polar residues predominate over residues 85–95; the sequence is STNRQSGRQPT. The segment at 109–163 is pre-S2; that stretch reads MQWNSTTFHQALQDPRVRGLYFPAGGSSSGTLNPVPNTASHISSVFSTTGDPAPN. The helical transmembrane segment at 171-191 threads the bilayer; that stretch reads FLGPLLVLQAGFFLLTKILTI. The Intravirion; in external conformation segment spans residues 192-242; the sequence is PQSLDSWWTSLNFLGGAPVCLGQNSQSPTSNHSPTSCPPICPGYRWMCLRR. The helical transmembrane segment at 243–263 threads the bilayer; the sequence is FIIFLFILLLCLIFLLVLLDY. The Virion surface segment spans residues 264–337; it reads QGMLPVCPLI…WASVRFSWLS (74 aa). N-linked (GlcNAc...) asparagine; by host glycosylation occurs at N309. The helical transmembrane segment at 338-358 threads the bilayer; the sequence is LLAPFVQWFAGLSPTVWLLAI. At 359–364 the chain is on the intravirion side; sequence WMMWYW. Residues 365–387 traverse the membrane as a helical segment; that stretch reads GPNLYNILSPFIPLLPIFFCLWV. The Virion surface segment spans residues 388 to 389; the sequence is YI.

Belongs to the orthohepadnavirus major surface antigen family. As to quaternary structure, in its internal form (Li-HBsAg), interacts with the capsid protein and with the isoform S. Interacts with host chaperone CANX. Associates with host chaperone CANX through its pre-S2 N glycan; this association may be essential for isoform M proper secretion. In terms of assembly, interacts with isoform L. Interacts with the antigens of satellite virus HDV (HDVAgs); this interaction is required for encapsidation of HDV genomic RNA. Isoform M is N-terminally acetylated by host at a ratio of 90%, and N-glycosylated by host at the pre-S2 region. Post-translationally, myristoylated.

It is found in the virion membrane. In terms of biological role, the large envelope protein exists in two topological conformations, one which is termed 'external' or Le-HBsAg and the other 'internal' or Li-HBsAg. In its external conformation the protein attaches the virus to cell receptors and thereby initiating infection. This interaction determines the species specificity and liver tropism. This attachment induces virion internalization predominantly through caveolin-mediated endocytosis. The large envelope protein also assures fusion between virion membrane and endosomal membrane. In its internal conformation the protein plays a role in virion morphogenesis and mediates the contact with the nucleocapsid like a matrix protein. Its function is as follows. The middle envelope protein plays an important role in the budding of the virion. It is involved in the induction of budding in a nucleocapsid independent way. In this process the majority of envelope proteins bud to form subviral lipoprotein particles of 22 nm of diameter that do not contain a nucleocapsid. This chain is Large envelope protein, found in Pan troglodytes (Chimpanzee).